The chain runs to 109 residues: Large ribosomal subunit protein uL22 (109 aa).

It belongs to the universal ribosomal protein uL22 family. Part of the 50S ribosomal subunit.

In terms of biological role, this protein binds specifically to 23S rRNA; its binding is stimulated by other ribosomal proteins, e.g. L4, L17, and L20. It is important during the early stages of 50S assembly. It makes multiple contacts with different domains of the 23S rRNA in the assembled 50S subunit and ribosome. Functionally, the globular domain of the protein is located near the polypeptide exit tunnel on the outside of the subunit, while an extended beta-hairpin is found that lines the wall of the exit tunnel in the center of the 70S ribosome. This chain is Large ribosomal subunit protein uL22, found in Cupriavidus metallidurans (strain ATCC 43123 / DSM 2839 / NBRC 102507 / CH34) (Ralstonia metallidurans).